We begin with the raw amino-acid sequence, 150 residues long: Protein Smg homolog (150 aa).

The protein belongs to the Smg family.

In Methylobacillus flagellatus (strain ATCC 51484 / DSM 6875 / VKM B-1610 / KT), this protein is Protein Smg homolog.